A 411-amino-acid polypeptide reads, in one-letter code: Inhibin beta B chain (411 aa).

A signal peptide spans methionine 1–glycine 28. The tract at residues tryptophan 27–glutamate 69 is disordered. Positions serine 29–arginine 296 are excised as a propeptide. Residues proline 30 to alanine 47 show a composition bias toward pro residues. Asparagine 97 carries an N-linked (GlcNAc...) asparagine glycan. Disulfide bonds link cysteine 300/cysteine 308, cysteine 307/cysteine 376, cysteine 336/cysteine 408, and cysteine 340/cysteine 410.

This sequence belongs to the TGF-beta family. Dimeric, linked by one or more disulfide bonds. Inhibin B is a dimer of alpha and beta-B. Activin B is a homodimer of beta-B. Activin AB is a dimer of beta-A and beta-B. Interacts with FST and FSTL3. Alpha- and beta-B subunits are the predominant forms found in rat testis. Also expressed in ovary.

It is found in the secreted. Inhibins and activins inhibit and activate, respectively, the secretion of follitropin by the pituitary gland. Inhibins/activins are involved in regulating a number of diverse functions such as hypothalamic and pituitary hormone secretion, gonadal hormone secretion, germ cell development and maturation, erythroid differentiation, insulin secretion, nerve cell survival, embryonic axial development or bone growth, depending on their subunit composition. Inhibins appear to oppose the functions of activins. Functionally, activin B is a dimer of alpha and beta-B that plays a role in several essential biological processes including embryonic development, stem cell maintenance and differentiation, haematopoiesis, cell proliferation and wound healing. Signals through type I receptor ACVR1C, abundantly expressed in pancreatic beta cells, and type II receptors like ACVR2A. Upon ligand binding, these receptors phosphorylate intracellular signaling mediators SMAD2 and SMAD3, which form a complex with SMAD4, translocate to the nucleus, and regulate gene expression. Plays a crucial role in the induction of hepcidin by inflammation through activation of ACVR1C and subsequent phosphorylation of SMAD1/5/8. Regulates adipocyte lipid metabolism by decreasing non-esterified fatty acids and glycerol release and increases intracellular triglyceride content. Stimulates wound healing by promoting cell migration and hair follicle regeneration through the JNK and ERK signaling pathways downstream of RHOA. Its function is as follows. Inhibin B is a dimer of alpha and beta-B that plays a crucial role in the regulation of the reproductive system by inhibiting the secretion of follicle-stimulating hormone (FSH) from the anterior pituitary gland. Thereby, maintains reproductive homeostasis in both males and females. Acts as a more potent suppressor of FSH release than inhibin A. Functions as competitive receptor antagonist binding activin type II receptors with high affinity in the presence of the TGF-beta type III coreceptor/TGFBR3L. The protein is Inhibin beta B chain (Inhbb) of Rattus norvegicus (Rat).